The following is a 265-amino-acid chain: MWIHPMPDPVALSIGPLAIRWYGLMYLAAFAQFIWLARIRIKQPHIARAGWKKEDIDDMLFYGVLGVIIGGRLGEVLFYDPSYYFSNPLEIFKVWKGGMSFHGGFLGVLLAMSIWARRQGRNVLDVWDFIAPMVPLGYAFGRLGNFINAELPGRIADASLPWAMIWPNVDNLPRHPSPLYQALVDGLLMFILLWLFARKERPRMAVGGMFALLYGSARFFTEYFRMPDYEVHFAGITISAGQMLSVPLIVLGIVMLLIAYRKKPA.

Transmembrane regions (helical) follow at residues L17–A37, M59–Y79, V94–I114, V123–L143, S177–A197, M204–F224, and I238–I258. R142 serves as a coordination point for a 1,2-diacyl-sn-glycero-3-phospho-(1'-sn-glycerol).

This sequence belongs to the Lgt family.

Its subcellular location is the cell inner membrane. It carries out the reaction L-cysteinyl-[prolipoprotein] + a 1,2-diacyl-sn-glycero-3-phospho-(1'-sn-glycerol) = an S-1,2-diacyl-sn-glyceryl-L-cysteinyl-[prolipoprotein] + sn-glycerol 1-phosphate + H(+). It functions in the pathway protein modification; lipoprotein biosynthesis (diacylglyceryl transfer). In terms of biological role, catalyzes the transfer of the diacylglyceryl group from phosphatidylglycerol to the sulfhydryl group of the N-terminal cysteine of a prolipoprotein, the first step in the formation of mature lipoproteins. This Janthinobacterium sp. (strain Marseille) (Minibacterium massiliensis) protein is Phosphatidylglycerol--prolipoprotein diacylglyceryl transferase.